The chain runs to 192 residues: Phosphoheptose isomerase (192 aa).

Residues 37-192 enclose the SIS domain; the sequence is LADSFKQEGK…IQLVEKEMAK (156 aa). 52 to 54 provides a ligand contact to substrate; sequence NGG. Zn(2+) is bound by residues His-61 and Glu-65. Substrate is bound by residues Glu-65, 93–94, 119–121, Ser-124, and Gln-172; these read ND and STS. 2 residues coordinate Zn(2+): Gln-172 and His-180.

This sequence belongs to the SIS family. GmhA subfamily. Homotetramer. Zn(2+) serves as cofactor.

It localises to the cytoplasm. It catalyses the reaction 2 D-sedoheptulose 7-phosphate = D-glycero-alpha-D-manno-heptose 7-phosphate + D-glycero-beta-D-manno-heptose 7-phosphate. Its pathway is carbohydrate biosynthesis; D-glycero-D-manno-heptose 7-phosphate biosynthesis; D-glycero-alpha-D-manno-heptose 7-phosphate and D-glycero-beta-D-manno-heptose 7-phosphate from sedoheptulose 7-phosphate: step 1/1. Catalyzes the isomerization of sedoheptulose 7-phosphate in D-glycero-D-manno-heptose 7-phosphate. The chain is Phosphoheptose isomerase from Aeromonas hydrophila subsp. hydrophila (strain ATCC 7966 / DSM 30187 / BCRC 13018 / CCUG 14551 / JCM 1027 / KCTC 2358 / NCIMB 9240 / NCTC 8049).